We begin with the raw amino-acid sequence, 460 residues long: Tol-Pal system protein TolB (460 aa).

The N-terminal stretch at 1-22 is a signal peptide; it reads MTIFQKSFILLIIWNFSLFAFS.

This sequence belongs to the TolB family. The Tol-Pal system is composed of five core proteins: the inner membrane proteins TolA, TolQ and TolR, the periplasmic protein TolB and the outer membrane protein Pal. They form a network linking the inner and outer membranes and the peptidoglycan layer.

It localises to the periplasm. In terms of biological role, part of the Tol-Pal system, which plays a role in outer membrane invagination during cell division and is important for maintaining outer membrane integrity. TolB occupies a key intermediary position in the Tol-Pal system because it communicates directly with both membrane-embedded components, Pal in the outer membrane and TolA in the inner membrane. The polypeptide is Tol-Pal system protein TolB (Blochmanniella floridana).